The following is a 145-amino-acid chain: MPNKFLIIDNSILPDIFEKVVKVKELLANGKVKDITEGVKTVGISRSTYYKYKDFVFSVSEGVKSQKATIGLLLGHERGTLSKILDRIAEYQGNILTINQDIPINNTANVSITFDISQMSIGLKELVEEIKNTKNVIKVDLIAME.

In terms of domain architecture, ACT spans 69–144 (TIGLLLGHER…NVIKVDLIAM (76 aa)).

It belongs to the UPF0735 family.

The sequence is that of UPF0735 ACT domain-containing protein CLD_1535 from Clostridium botulinum (strain Okra / Type B1).